The sequence spans 424 residues: Hemagglutinin-esterase (424 aa).

The signal sequence occupies residues Met-1–Ser-16. Positions Phe-7–Gly-127 are esterase domain 1. Residues Leu-17–Ile-392 lie on the Virion surface side of the membrane. The Nucleophile role is filled by Ser-40. A disulfide bridge connects residues Cys-44 and Cys-65. Residues Asn-54, Asn-89, Asn-153, Asn-236, and Asn-301 are each glycosylated (N-linked (GlcNAc...) asparagine; by host). Disulfide bonds link Cys-113–Cys-162, Cys-197–Cys-276, and Cys-205–Cys-249. A receptor binding region spans residues Leu-128–Leu-266. The esterase domain 2 stretch occupies residues Leu-267–Thr-379. Cys-307 and Cys-312 are oxidised to a cystine. An N-linked (GlcNAc...) asparagine; by host glycan is attached at Asn-316. Catalysis depends on charge relay system residues Asp-326 and His-329. Cys-347 and Cys-371 are disulfide-bonded. Asn-358 carries an N-linked (GlcNAc...) asparagine; by host glycan. Residues Ile-393–Phe-413 traverse the membrane as a helical segment. Residues Met-414–Ala-424 lie on the Intravirion side of the membrane. N-linked (GlcNAc...) asparagine; by host glycosylation occurs at Asn-417.

It belongs to the influenza type C/coronaviruses hemagglutinin-esterase family. In terms of assembly, homodimer; disulfide-linked. Forms a complex with the M protein in the pre-Golgi. Associates then with S-M complex to form a ternary complex S-M-HE. Post-translationally, N-glycosylated in the RER. In terms of processing, N-glycosylated in the host RER.

The protein resides in the virion membrane. It localises to the host cell membrane. The enzyme catalyses N-acetyl-9-O-acetylneuraminate + H2O = N-acetylneuraminate + acetate + H(+). It carries out the reaction N-acetyl-4-O-acetylneuraminate + H2O = N-acetylneuraminate + acetate + H(+). Functionally, structural protein that makes short spikes at the surface of the virus. Contains receptor binding and receptor-destroying activities. Mediates de-O-acetylation of N-acetyl-4-O-acetylneuraminic acid, which is probably the receptor determinant recognized by the virus on the surface of erythrocytes and susceptible cells. This receptor-destroying activity is important for virus release as it probably helps preventing self-aggregation and ensures the efficient spread of the progeny virus from cell to cell. May serve as a secondary viral attachment protein for initiating infection, the spike protein being the major one. May become a target for both the humoral and the cellular branches of the immune system. The protein is Hemagglutinin-esterase of Bovine coronavirus (strain 98TXSF-110-ENT) (BCoV-ENT).